A 164-amino-acid polypeptide reads, in one-letter code: MRLTSKGRYAVTAMLDVALNSEAGPVPLADISERQGISLSYLEQLFSRLRKNGLVSSVRGPGGGYLLGKDAGSIAVGEVISAVDESVDATRCQGKGGCQGGDKCLTHALWRDLSDRLTGFLNNITLGELVNNQEVLDVSGRQHTHDAPRASGRAQDAIDVKLRA.

The HTH rrf2-type domain maps to 2–131; it reads RLTSKGRYAV…NNITLGELVN (130 aa). Residues 28–51 constitute a DNA-binding region (H-T-H motif); it reads LADISERQGISLSYLEQLFSRLRK. [2Fe-2S] cluster-binding residues include C92, C98, and C104.

Requires [2Fe-2S] cluster as cofactor.

In terms of biological role, regulates the transcription of several operons and genes involved in the biogenesis of Fe-S clusters and Fe-S-containing proteins. This chain is HTH-type transcriptional regulator IscR, found in Salmonella choleraesuis (strain SC-B67).